The chain runs to 235 residues: 7-carboxy-7-deazaguanine synthase (235 aa).

Residues L27–G29 and R42 contribute to the substrate site. Positions F33 to A235 constitute a Radical SAM core domain. C46, C50, and C53 together coordinate [4Fe-4S] cluster. T55 serves as a coordination point for Mg(2+). T87 serves as a coordination point for substrate. S-adenosyl-L-methionine contacts are provided by residues G89 and S133–K135.

Belongs to the radical SAM superfamily. 7-carboxy-7-deazaguanine synthase family. In terms of assembly, homodimer. Requires [4Fe-4S] cluster as cofactor. The cofactor is S-adenosyl-L-methionine. Mg(2+) is required as a cofactor.

The catalysed reaction is 6-carboxy-5,6,7,8-tetrahydropterin + H(+) = 7-carboxy-7-deazaguanine + NH4(+). Its pathway is purine metabolism; 7-cyano-7-deazaguanine biosynthesis. Its function is as follows. Catalyzes the complex heterocyclic radical-mediated conversion of 6-carboxy-5,6,7,8-tetrahydropterin (CPH4) to 7-carboxy-7-deazaguanine (CDG), a step common to the biosynthetic pathways of all 7-deazapurine-containing compounds. The sequence is that of 7-carboxy-7-deazaguanine synthase from Rhodospirillum rubrum (strain ATCC 11170 / ATH 1.1.1 / DSM 467 / LMG 4362 / NCIMB 8255 / S1).